A 356-amino-acid chain; its full sequence is MSLWVDKYRPCSLGQLDYHKEQAAQLRNLVQCGDFPHLLVYGPSGAGKKTRIMCILRELYGVGVEKLRIEHQTITTPSKKKIEISTIASNYHLEVNPSDAGNSDRVVIQEMLKTVAQSQQLETSSQKDFKVVLLTEVDKLTKDAQHALRRTMEKYMSTCRLILCCNSTSKVIPPIRSRCLAVRVPAPSIEDICHVLSTVCKKEGLNLPPQLAHRLAEKSCRNLRKALLMCEACRVQQYPFTADQEIPETDWEVYLRETANAIVSQQTPQRLLEVRGRLYELLTHCIPPEIIMKGLLSELLHNCDGQLKGEVAQMAAYYEHRLQLGSKAIYHLEAFVAKFMALYKKFMEDGLEGMIF.

At Lys-20 the chain carries N6-acetyllysine. Phosphoserine is present on Ser-125.

The protein belongs to the activator 1 small subunits family. In terms of assembly, subunit of the RFC complex, an heteropentameric complex consisting of a large subunit RFC1 and four small subunits RFC2, RFC3, RFC4 and RFC5; the RFC complex interacts with PCNA. Forms an heterotetrameric complex with RFC2, RFC4 and RFC5; this complex has ATPase activity but is not stimulated by PCNA. The heterotetramer of subunits RFC2, RFC3, RFC4 and RFC5 interacts with RAD17. Interacts with CNTD1; this interaction facilitates crossover formation.

The protein localises to the nucleus. In terms of biological role, subunit of the replication factor C (RFC) complex which acts during elongation of primed DNA templates by DNA polymerases delta and epsilon, and is necessary for ATP-dependent loading of proliferating cell nuclear antigen (PCNA) onto primed DNA. The sequence is that of Replication factor C subunit 3 (RFC3) from Bos taurus (Bovine).